The following is a 501-amino-acid chain: ADP,ATP carrier protein 3 (501 aa).

The next 12 helical transmembrane spans lie at 23–43, 59–79, 90–110, 146–166, 183–203, 227–247, 293–313, 326–346, 361–381, 383–403, 446–466, and 470–490; these read LKLF…FGAL, IISF…TVLY, YIFY…AYII, YALM…LMFW, PVLG…LVFF, IILQ…MFLF, IALL…PWKA, VNFM…FMII, LLTP…IIFI, EIGT…VGAI, FGKS…PTAT, and IIIY…WNII.

It belongs to the ADP/ATP translocase tlc family.

The protein localises to the cell membrane. Functionally, provides the rickettsial cell with host ATP in exchange for rickettsial ADP. This is an obligate exchange system. This energy acquiring activity is an important component of rickettsial parasitism. This chain is ADP,ATP carrier protein 3 (tlcC), found in Rickettsia typhi (strain ATCC VR-144 / Wilmington).